The sequence spans 370 residues: 3-hydroxy-3-methylglutaryl-CoA lyase, cytoplasmic (370 aa).

A lipid anchor (N-myristoyl glycine) is attached at Gly-2. Residues 78–345 (VKIVEVGPRD…NTGVNLYKVM (268 aa)) enclose the Pyruvate carboxyltransferase domain. Substrate is bound at residue Arg-86. The a divalent metal cation site is built by Asp-87, His-278, and His-280. Residue Cys-311 is part of the active site. An a divalent metal cation-binding site is contributed by Asn-320.

The protein belongs to the HMG-CoA lyase family. It depends on a divalent metal cation as a cofactor.

It is found in the cytoplasm. Its subcellular location is the cytosol. The protein resides in the endoplasmic reticulum membrane. The enzyme catalyses (3S)-3-hydroxy-3-methylglutaryl-CoA = acetoacetate + acetyl-CoA. It functions in the pathway metabolic intermediate metabolism; (S)-3-hydroxy-3-methylglutaryl-CoA degradation; acetoacetate from (S)-3-hydroxy-3-methylglutaryl-CoA: step 1/1. In terms of biological role, non-mitochondrial 3-hydroxy-3-methylglutaryl-CoA lyase that catalyzes a cation-dependent cleavage of (S)-3-hydroxy-3-methylglutaryl-CoA into acetyl-CoA and acetoacetate, a key step in ketogenesis, the products of which support energy production in nonhepatic animal tissues. This is 3-hydroxy-3-methylglutaryl-CoA lyase, cytoplasmic (HMGCLL1) from Homo sapiens (Human).